A 478-amino-acid chain; its full sequence is Cytochrome c-552 (478 aa).

Positions 1-26 are cleaved as a signal peptide; the sequence is MARTILRARRFFSLILPFFFISSVYA. Heme c is bound at residue histidine 94. Cysteine 122, cysteine 125, and lysine 126 together coordinate heme. Residues cysteine 160, cysteine 163, histidine 164, cysteine 209, cysteine 212, and histidine 213 each coordinate heme c. Residues glutamate 215, tyrosine 216, lysine 261, and glutamine 263 each coordinate Ca(2+). Tyrosine 216 serves as a coordination point for substrate. Residue histidine 264 participates in substrate binding. Residues histidine 275, cysteine 282, cysteine 285, histidine 286, histidine 301, cysteine 314, cysteine 317, histidine 318, and histidine 393 each coordinate heme c.

The protein belongs to the cytochrome c-552 family. It depends on Ca(2+) as a cofactor. The cofactor is heme c.

The protein resides in the periplasm. It carries out the reaction 6 Fe(III)-[cytochrome c] + NH4(+) + 2 H2O = 6 Fe(II)-[cytochrome c] + nitrite + 8 H(+). The protein operates within nitrogen metabolism; nitrate reduction (assimilation). In terms of biological role, catalyzes the reduction of nitrite to ammonia, consuming six electrons in the process. The sequence is that of Cytochrome c-552 from Citrobacter koseri (strain ATCC BAA-895 / CDC 4225-83 / SGSC4696).